The sequence spans 164 residues: Peptidyl-prolyl cis-trans isomerase A-like 4A (164 aa).

The PPIase cyclophilin-type domain occupies 7–163 (FFDITVDGKP…KKITIADCGQ (157 aa)).

The protein belongs to the cyclophilin-type PPIase family. PPIase A subfamily. Highly expressed in brain, ovary and mammary gland. Moderately expressed in lung, salivary gland, kidney, skin, adipose tissue, intestine and spleen. Weakly expressed in skeletal muscle, liver and stomach. Expressed in pleiomorphic and undifferentiated liposarcomas, osteosarcomas and breast carcinomas.

It localises to the cytoplasm. The catalysed reaction is [protein]-peptidylproline (omega=180) = [protein]-peptidylproline (omega=0). Functionally, PPIases accelerate the folding of proteins. It catalyzes the cis-trans isomerization of proline imidic peptide bonds in oligopeptides. In Homo sapiens (Human), this protein is Peptidyl-prolyl cis-trans isomerase A-like 4A.